Consider the following 318-residue polypeptide: Trans-prenyltransferase (318 aa).

Residues 1-21 form a helical membrane-spanning segment; it reads MLHLIYISIIVVLIIILISYT. Residues Lys85, Arg88, and His122 each contribute to the isopentenyl diphosphate site. 2 residues coordinate Mg(2+): Asp129 and Asp135. Arg140 is a binding site for dimethylallyl diphosphate. Isopentenyl diphosphate is bound at residue Arg141. The dimethylallyl diphosphate site is built by Lys216, Thr217, and Gln254.

Belongs to the FPP/GGPP synthase family. Asfivirus trans-prenyltransferase subfamily. The cofactor is Mg(2+).

It is found in the host endoplasmic reticulum. It localises to the host membrane. The enzyme catalyses isopentenyl diphosphate + dimethylallyl diphosphate = (2E)-geranyl diphosphate + diphosphate. It carries out the reaction isopentenyl diphosphate + (2E)-geranyl diphosphate = (2E,6E)-farnesyl diphosphate + diphosphate. The catalysed reaction is isopentenyl diphosphate + (2E,6E)-farnesyl diphosphate = (2E,6E,10E)-geranylgeranyl diphosphate + diphosphate. It catalyses the reaction isopentenyl diphosphate + (2E,6E,10E)-geranylgeranyl diphosphate = (2E,6E,10E,14E)-geranylfarnesyl diphosphate + diphosphate. It functions in the pathway isoprenoid biosynthesis; farnesyl diphosphate biosynthesis; farnesyl diphosphate from geranyl diphosphate and isopentenyl diphosphate: step 1/1. Its pathway is isoprenoid biosynthesis; geranyl diphosphate biosynthesis; geranyl diphosphate from dimethylallyl diphosphate and isopentenyl diphosphate: step 1/1. It participates in isoprenoid biosynthesis; geranylgeranyl diphosphate biosynthesis; geranylgeranyl diphosphate from farnesyl diphosphate and isopentenyl diphosphate: step 1/1. In terms of biological role, trans-prenyltransferase that catalyzes the sequential condensation of isopentenyl diphosphate (IPP) with different allylic diphosphates, such as dimethylallyl diphosphate (DMAPP), geranyl diphosphate (GPP), farnesyl diphosphate (FPP) and geranylgeranyl diphosphate (GGPP), farnesyl diphosphate being the best allylic substrate. The polypeptide is Trans-prenyltransferase (Ornithodoros (relapsing fever ticks)).